The following is a 242-amino-acid chain: 2-C-methyl-D-erythritol 4-phosphate cytidylyltransferase (242 aa).

The protein belongs to the IspD/TarI cytidylyltransferase family. IspD subfamily.

It catalyses the reaction 2-C-methyl-D-erythritol 4-phosphate + CTP + H(+) = 4-CDP-2-C-methyl-D-erythritol + diphosphate. The protein operates within isoprenoid biosynthesis; isopentenyl diphosphate biosynthesis via DXP pathway; isopentenyl diphosphate from 1-deoxy-D-xylulose 5-phosphate: step 2/6. Functionally, catalyzes the formation of 4-diphosphocytidyl-2-C-methyl-D-erythritol from CTP and 2-C-methyl-D-erythritol 4-phosphate (MEP). In Halorhodospira halophila (strain DSM 244 / SL1) (Ectothiorhodospira halophila (strain DSM 244 / SL1)), this protein is 2-C-methyl-D-erythritol 4-phosphate cytidylyltransferase.